A 271-amino-acid polypeptide reads, in one-letter code: Tryptophan synthase alpha chain (271 aa).

Catalysis depends on proton acceptor residues Glu49 and Asp60.

The protein belongs to the TrpA family. As to quaternary structure, tetramer of two alpha and two beta chains.

The catalysed reaction is (1S,2R)-1-C-(indol-3-yl)glycerol 3-phosphate + L-serine = D-glyceraldehyde 3-phosphate + L-tryptophan + H2O. It functions in the pathway amino-acid biosynthesis; L-tryptophan biosynthesis; L-tryptophan from chorismate: step 5/5. Its function is as follows. The alpha subunit is responsible for the aldol cleavage of indoleglycerol phosphate to indole and glyceraldehyde 3-phosphate. In Burkholderia pseudomallei (strain K96243), this protein is Tryptophan synthase alpha chain.